A 254-amino-acid chain; its full sequence is Pyridoxine 5'-phosphate synthase (254 aa).

A 3-amino-2-oxopropyl phosphate-binding site is contributed by N12. Residue 14–15 (DH) coordinates 1-deoxy-D-xylulose 5-phosphate. 3-amino-2-oxopropyl phosphate is bound at residue R23. The active-site Proton acceptor is the H48. 1-deoxy-D-xylulose 5-phosphate is bound by residues R50 and H55. The Proton acceptor role is filled by E75. T105 lines the 1-deoxy-D-xylulose 5-phosphate pocket. Catalysis depends on H199, which acts as the Proton donor. 3-amino-2-oxopropyl phosphate-binding positions include G200 and 221 to 222 (GF).

It belongs to the PNP synthase family. In terms of assembly, homooctamer; tetramer of dimers.

Its subcellular location is the cytoplasm. It catalyses the reaction 3-amino-2-oxopropyl phosphate + 1-deoxy-D-xylulose 5-phosphate = pyridoxine 5'-phosphate + phosphate + 2 H2O + H(+). Its pathway is cofactor biosynthesis; pyridoxine 5'-phosphate biosynthesis; pyridoxine 5'-phosphate from D-erythrose 4-phosphate: step 5/5. Its function is as follows. Catalyzes the complicated ring closure reaction between the two acyclic compounds 1-deoxy-D-xylulose-5-phosphate (DXP) and 3-amino-2-oxopropyl phosphate (1-amino-acetone-3-phosphate or AAP) to form pyridoxine 5'-phosphate (PNP) and inorganic phosphate. The protein is Pyridoxine 5'-phosphate synthase of Rhodopseudomonas palustris (strain TIE-1).